A 129-amino-acid polypeptide reads, in one-letter code: Follitropin subunit beta (129 aa).

An N-terminal signal peptide occupies residues 1 to 20; the sequence is MKSVQLCFLFCCWRAICCKS. Cystine bridges form between Cys21–Cys69, Cys35–Cys84, Cys38–Cys122, Cys46–Cys100, Cys50–Cys102, and Cys105–Cys112. 2 N-linked (GlcNAc...) asparagine glycosylation sites follow: Asn25 and Asn42.

This sequence belongs to the glycoprotein hormones subunit beta family. As to quaternary structure, heterodimer. The active follitropin is a heterodimer composed of an alpha chain/CGA shared with other hormones and a unique beta chain/FSHB shown here.

Its subcellular location is the secreted. Functionally, together with the alpha chain CGA constitutes follitropin, the follicle-stimulating hormone, and provides its biological specificity to the hormone heterodimer. Binds FSHR, a G protein-coupled receptor, on target cells to activate downstream signaling pathways. Follitropin is involved in follicle development and spermatogenesis in reproductive organs. This Ailuropoda melanoleuca (Giant panda) protein is Follitropin subunit beta (FSHB).